Consider the following 138-residue polypeptide: Enhancer of split malpha protein (138 aa).

This sequence belongs to the M4-like protein family.

In terms of biological role, part of the Notch signaling pathway. This chain is Enhancer of split malpha protein, found in Drosophila melanogaster (Fruit fly).